Here is a 340-residue protein sequence, read N- to C-terminus: 4-dimethylallyltryptophan N-methyltransferase ifgB (340 aa).

Belongs to the methyltransferase superfamily. Homodimer.

The enzyme catalyses 4-(3-methylbut-2-enyl)-L-tryptophan + S-adenosyl-L-methionine = 4-(3-methylbut-2-enyl)-L-abrine + S-adenosyl-L-homocysteine + H(+). Its pathway is alkaloid biosynthesis; ergot alkaloid biosynthesis. 4-dimethylallyltryptophan N-methyltransferase; part of the gene cluster that mediates the biosynthesis of isofumigaclavines, fungal ergot alkaloids. The tryptophan dimethylallyltransferase ifgA catalyzes the first step of ergot alkaloid biosynthesis by condensing dimethylallyl diphosphate (DMAP) and tryptophan to form 4-dimethylallyl-L-tryptophan. The second step is catalyzed by the methyltransferase ifgB that methylates 4-dimethylallyl-L-tryptophan in the presence of S-adenosyl-L-methionine, resulting in the formation of N-methyl-dimethylallyl-L-tryptophan. The catalase ifgD and the FAD-dependent oxidoreductase ifgC then transform N-methyl-dimethylallyl-L-tryptophan to chanoclavine-I which is further oxidized by ifgE in the presence of NAD(+), resulting in the formation of chanoclavine-I aldehyde. The chanoclavine-I aldehyde reductases ifgG and/or fgaOx3 reduce chanoclavine-I aldehyde to dihydrochanoclavine-I aldehyde that spontaneously dehydrates to form 6,8-dimethyl-6,7-didehydroergoline. The festuclavine dehydrogenases ifgF1 and/or ifgF2 then catalyze the reduction of 6,8-dimethyl-6,7-didehydroergoline to form festuclavine. Hydrolysis of festuclavine by a yet undetermined cytochrome P450 monooxygenase (called ifgH) then leads to the formation of isofumigaclavine B which is in turn acetylated by ifgI to isofumigaclavine A. Penicillium roqueforti has interestingly at least two sets of genes for the consumption of chanoclavine-I aldehyde on three different loci, the OYEs ifgG/fgaOx3 and the festuclavine synthase homologs ifgF1/ifgF2. The reason for the duplication of these genes is unclear, probably to ensure the conversion of chanoclavine-I aldehyde by differential gene expression under various environmental conditions. This Penicillium roqueforti (strain FM164) protein is 4-dimethylallyltryptophan N-methyltransferase ifgB.